Here is a 454-residue protein sequence, read N- to C-terminus: uncharacterized protein (454 aa).

In terms of domain architecture, HNH spans Cys-364–Leu-405.

It belongs to the Rv1128c/1148c/1588c/1702c/1945/3466 family.

This is an uncharacterized protein from Mycobacterium tuberculosis (strain ATCC 25618 / H37Rv).